The chain runs to 300 residues: Transcription initiation factor IIB 1 (300 aa).

The TFIIB-type zinc finger occupies 3-34 (GKRVCPVCGSTEFIYDPSRGEIVCKVCGYVIE). Zn(2+)-binding residues include Cys7, Cys10, Cys26, and Cys29. 2 repeat units span residues 114–197 (SELD…ARHL) and 210–291 (DYVN…ELVE).

The protein belongs to the TFIIB family.

Its function is as follows. Stabilizes TBP binding to an archaeal box-A promoter. Also responsible for recruiting RNA polymerase II to the pre-initiation complex (DNA-TBP-TFIIB). This is Transcription initiation factor IIB 1 from Thermococcus kodakarensis (strain ATCC BAA-918 / JCM 12380 / KOD1) (Pyrococcus kodakaraensis (strain KOD1)).